Reading from the N-terminus, the 176-residue chain is Probable DNA-directed RNA polymerase subunit delta (176 aa).

Residues 14–81 (KSFIDMAYTL…GENLWGLRDW (68 aa)) enclose the HTH HARE-type domain. The tract at residues 114–176 (LGEDEMDDDD…VFEDEEDFND (63 aa)) is disordered. Composition is skewed to acidic residues over residues 116–145 (EDEM…QVEE) and 153–176 (VIEE…DFND).

This sequence belongs to the RpoE family. In terms of assembly, RNAP is composed of a core of 2 alpha, a beta and a beta' subunits. The core is associated with a delta subunit and one of several sigma factors.

Its function is as follows. Participates in both the initiation and recycling phases of transcription. In the presence of the delta subunit, RNAP displays an increased specificity of transcription, a decreased affinity for nucleic acids, and an increased efficiency of RNA synthesis because of enhanced recycling. The sequence is that of Probable DNA-directed RNA polymerase subunit delta from Staphylococcus aureus (strain JH1).